Consider the following 160-residue polypeptide: Globin CTT-Y (160 aa).

Positions 1–16 (MKVLAIFALCIIGALA) are cleaved as a signal peptide. The region spanning 17–160 (TPCDDFKIMQ…IRKVINANLE (144 aa)) is the Globin domain. Heme b-binding residues include H74 and H109.

It belongs to the globin family.

This Chironomus thummi piger (Midge) protein is Globin CTT-Y (CTT-Y).